The primary structure comprises 940 residues: Gamma-aminobutyric acid type B receptor subunit 2 (940 aa).

The N-terminal stretch at 1 to 40 is a signal peptide; that stretch reads MASPPSSGQPRPPPPPPPPARLLLPLLLSLLLWLAPGAWG. At 41–482 the chain is on the extracellular side; it reads WTRGAPRPPP…LRKISLPLYS (442 aa). N89 carries N-linked (GlcNAc...) asparagine glycosylation. Disulfide bonds link C107–C134, C236–C265, and C264–C301. N-linked (GlcNAc...) asparagine glycans are attached at residues N297, N388, N403, and N452. The helical transmembrane segment at 483 to 503 threads the bilayer; sequence ILSALTILGMIMASAFLFFNI. The Cytoplasmic portion of the chain corresponds to 504 to 521; the sequence is KNRNQKLIKMSSPYMNNL. A helical transmembrane segment spans residues 522 to 542; that stretch reads IILGGMLSYASIFLFGLDGSF. The Extracellular portion of the chain corresponds to 543-550; sequence VSEKTFET. Residues 551–571 traverse the membrane as a helical segment; that stretch reads LCTVRTWILTVGYTTAFGAMF. The Cytoplasmic segment spans residues 572–596; that stretch reads AKTWRVHAIFKNVKMKKKIIKDQKL. Residues 597 to 617 traverse the membrane as a helical segment; the sequence is LVIVGGMLLIDLCILICWQAV. Over 618 to 653 the chain is Extracellular; that stretch reads DPLRRTVERYSMEPDPAGRDISIRPLLEHCENTHMT. Residues 654 to 674 traverse the membrane as a helical segment; that stretch reads IWLGIVYAYKGLLMLFGCFLA. Topologically, residues 675–690 are cytoplasmic; the sequence is WETRNVSIPALNDSKY. A helical membrane pass occupies residues 691-711; the sequence is IGMSVYNVGIMCIIGAAVSFL. Residues 712 to 719 lie on the Extracellular side of the membrane; that stretch reads TRDQPNVQ. Residues 720–740 form a helical membrane-spanning segment; sequence FCIVALVIIFCSTITLCLVFV. Residues 741 to 940 are Cytoplasmic-facing; that stretch reads PKLITLRTNP…PSFRVMVSGL (200 aa). A disordered region spans residues 762–789; sequence TQNQKKEDSKTSTSVTSVNQASTSRLEG. Polar residues predominate over residues 772–786; that stretch reads TSTSVTSVNQASTSR. Residues S775 and S778 each carry the phosphoserine modification. Residues 780 to 818 are a coiled coil; the sequence is NQASTSRLEGLQSENHRLRMKITELDKDLEEVTMQLQDT. At T818 the chain carries Phosphothreonine. A phosphoserine mark is found at S883, S892, S912, S915, S919, and S923.

Belongs to the G-protein coupled receptor 3 family. GABA-B receptor subfamily. In terms of assembly, heterodimer of GABBR1 and GABBR2. Homodimers may form, but are inactive. Interacts (via C-terminus) with ATF4 (via leucine zipper domain). Interacts with KCTD8, KCTD12 and KCTD16; this interaction determines the pharmacology and kinetics of the receptor response, the KCTD proteins markedly accelerating the GABA-B response, although to different extents. Highly expressed in areas of the brain including thalamic nuclei, the hippocampus, cerebellar Purkinje cells and the medial habenula, and moderately expressed in the cerebral cortex, certain anterioventral thalamic nuclei, dorsal medial hypothalamic nucleus and suprachiasmatic nuclei. Also weakly expressed in the testis.

Its subcellular location is the cell membrane. The protein localises to the postsynaptic cell membrane. It localises to the perikaryon. It is found in the cell projection. The protein resides in the dendrite. Component of a heterodimeric G-protein coupled receptor for GABA, formed by GABBR1 and GABBR2. Within the heterodimeric GABA receptor, only GABBR1 seems to bind agonists, while GABBR2 mediates coupling to G proteins. Ligand binding causes a conformation change that triggers signaling via guanine nucleotide-binding proteins (G proteins) and modulates the activity of down-stream effectors, such as adenylate cyclase. Signaling inhibits adenylate cyclase, stimulates phospholipase A2, activates potassium channels, inactivates voltage-dependent calcium-channels and modulates inositol phospholipid hydrolysis. Plays a critical role in the fine-tuning of inhibitory synaptic transmission. Pre-synaptic GABA receptor inhibits neurotransmitter release by down-regulating high-voltage activated calcium channels, whereas postsynaptic GABA receptor decreases neuronal excitability by activating a prominent inwardly rectifying potassium (Kir) conductance that underlies the late inhibitory postsynaptic potentials. Not only implicated in synaptic inhibition but also in hippocampal long-term potentiation, slow wave sleep, muscle relaxation and antinociception. This chain is Gamma-aminobutyric acid type B receptor subunit 2 (Gabbr2), found in Rattus norvegicus (Rat).